Here is a 245-residue protein sequence, read N- to C-terminus: Zinc finger CCCH domain-containing protein 54 (245 aa).

A C3H1-type zinc finger spans residues 92-119; sequence TYCAVACPAFRNGACHRGDSCEFAHGVF. Positions 175–204 are disordered; it reads GNGDGVTMRMDDEGYDTSRSPVRSGKDDLD.

Interacts with MARD1/FLZ9 and RD21A. Specifically expressed in embryo (at protein level).

It is found in the nucleus. Embryo-specific transcription factor required at the globular to heart stage transition in embryo development. This is Zinc finger CCCH domain-containing protein 54 from Arabidopsis thaliana (Mouse-ear cress).